Reading from the N-terminus, the 219-residue chain is UPF0319 protein MS0844 (219 aa).

An N-terminal signal peptide occupies residues 1 to 21; sequence MKFRLTALAVAALLTSTASFA.

Belongs to the UPF0319 family.

The sequence is that of UPF0319 protein MS0844 from Mannheimia succiniciproducens (strain KCTC 0769BP / MBEL55E).